Consider the following 273-residue polypeptide: 3-keto-5-aminohexanoate cleavage enzyme (273 aa).

Glutamate 14 provides a ligand contact to (5S)-5-amino-3-oxohexanoate. Zn(2+)-binding residues include histidine 46 and histidine 48. (5S)-5-amino-3-oxohexanoate is bound by residues serine 82, glycine 85, and serine 106. Glutamate 227 contacts Zn(2+).

It belongs to the BKACE family. Kce subfamily. In terms of assembly, homotetramer. Zn(2+) serves as cofactor.

The enzyme catalyses (5S)-5-amino-3-oxohexanoate + acetyl-CoA = (3S)-3-aminobutanoyl-CoA + acetoacetate. Its pathway is amino-acid degradation; L-lysine degradation via acetate pathway. Its function is as follows. Involved in the anaerobic fermentation of lysine. Catalyzes the reversible reaction between 3-keto-5-aminohexanoate (KAH) and acetyl-CoA to form 3-aminobutyryl-CoA and acetoacetate. The reaction involves the deprotonation of KAH, the nucleophilic addition onto acetyl-CoA and the intramolecular transfer of the CoA moiety. This is 3-keto-5-aminohexanoate cleavage enzyme from Acetoanaerobium sticklandii (strain ATCC 12662 / DSM 519 / JCM 1433 / CCUG 9281 / NCIMB 10654 / HF) (Clostridium sticklandii).